The chain runs to 205 residues: Adenylate kinase (205 aa).

ATP is bound at residue 11–16 (GSGKGT). The tract at residues 31–60 (STGDIFRHNVKSMTPLGVEAKRYIDNGDFV) is NMP. Residues Thr32, Arg37, 58-60 (DFV), 86-89 (GYPR), and Gln93 contribute to the AMP site. Positions 127–137 (KRAEIEGRADD) are LID. Arg128 contacts ATP. Arg134 and Arg145 together coordinate AMP. Gly173 is an ATP binding site.

It belongs to the adenylate kinase family. In terms of assembly, monomer.

The protein localises to the cytoplasm. The enzyme catalyses AMP + ATP = 2 ADP. It participates in purine metabolism; AMP biosynthesis via salvage pathway; AMP from ADP: step 1/1. Its function is as follows. Catalyzes the reversible transfer of the terminal phosphate group between ATP and AMP. Plays an important role in cellular energy homeostasis and in adenine nucleotide metabolism. This Micrococcus luteus (strain ATCC 4698 / DSM 20030 / JCM 1464 / CCM 169 / CCUG 5858 / IAM 1056 / NBRC 3333 / NCIMB 9278 / NCTC 2665 / VKM Ac-2230) (Micrococcus lysodeikticus) protein is Adenylate kinase.